The sequence spans 264 residues: Thymidylate synthase (264 aa).

Arg21 lines the dUMP pocket. His51 is a (6R)-5,10-methylene-5,6,7,8-tetrahydrofolate binding site. 126–127 lines the dUMP pocket; sequence RR. Cys146 (nucleophile) is an active-site residue. Residues 166-169, Asn177, and 207-209 each bind dUMP; these read RSCD and HLY. Asp169 contributes to the (6R)-5,10-methylene-5,6,7,8-tetrahydrofolate binding site. Position 263 (Ala263) interacts with (6R)-5,10-methylene-5,6,7,8-tetrahydrofolate.

The protein belongs to the thymidylate synthase family. Bacterial-type ThyA subfamily. As to quaternary structure, homodimer.

The protein localises to the cytoplasm. The enzyme catalyses dUMP + (6R)-5,10-methylene-5,6,7,8-tetrahydrofolate = 7,8-dihydrofolate + dTMP. Its pathway is pyrimidine metabolism; dTTP biosynthesis. Functionally, catalyzes the reductive methylation of 2'-deoxyuridine-5'-monophosphate (dUMP) to 2'-deoxythymidine-5'-monophosphate (dTMP) while utilizing 5,10-methylenetetrahydrofolate (mTHF) as the methyl donor and reductant in the reaction, yielding dihydrofolate (DHF) as a by-product. This enzymatic reaction provides an intracellular de novo source of dTMP, an essential precursor for DNA biosynthesis. In Salmonella arizonae (strain ATCC BAA-731 / CDC346-86 / RSK2980), this protein is Thymidylate synthase.